The following is a 519-amino-acid chain: Pleckstrin homology domain-containing family A member 8 (519 aa).

The region spanning 1–93 (MEGVLYKWTN…WLVALGSAKA (93 aa)) is the PH domain. At Thr-139 the chain carries Phosphothreonine. Position 145 is a phosphoserine (Ser-145). Thr-153 is subject to Phosphothreonine. Residues 274 to 302 (GEDNLGNHDSSLAQPASDSSSSPPESHWE) are disordered. The span at 282 to 298 (DSSLAQPASDSSSSPPE) shows a compositional bias: low complexity. The tract at residues 310–519 (TFFSTMNTSF…VHGLESDEVV (210 aa)) is glycolipid transfer protein homology domain.

Homodimer. Interacts with ARF1; the interaction together with phosphatidylinositol 4-phosphate binding is required for FAPP2 GlcCer transfer ability.

It localises to the golgi apparatus. The protein localises to the trans-Golgi network membrane. It is found in the membrane. Functionally, cargo transport protein that is required for apical transport from the trans-Golgi network (TGN). Transports AQP2 from the trans-Golgi network (TGN) to sites of AQP2 phosphorylation. Mediates the non-vesicular transport of glucosylceramide (GlcCer) from the trans-Golgi network (TGN) to the plasma membrane and plays a pivotal role in the synthesis of complex glycosphingolipids. Binding of both phosphatidylinositol 4-phosphate (PIP) and ARF1 are essential for the GlcCer transfer ability. Also required for primary cilium formation, possibly by being involved in the transport of raft lipids to the apical membrane, and for membrane tubulation. This Canis lupus familiaris (Dog) protein is Pleckstrin homology domain-containing family A member 8 (PLEKHA8).